A 500-amino-acid polypeptide reads, in one-letter code: Lysine--tRNA ligase (500 aa).

Mg(2+) is bound by residues glutamate 410 and glutamate 417.

It belongs to the class-II aminoacyl-tRNA synthetase family. Homodimer. It depends on Mg(2+) as a cofactor.

It localises to the cytoplasm. It catalyses the reaction tRNA(Lys) + L-lysine + ATP = L-lysyl-tRNA(Lys) + AMP + diphosphate. The polypeptide is Lysine--tRNA ligase (Shewanella loihica (strain ATCC BAA-1088 / PV-4)).